The following is a 465-amino-acid chain: ATP-dependent rRNA helicase rrp3 (465 aa).

A compositionally biased stretch (basic and acidic residues) spans 1–22 (MAPSEKKLTEDKKNSSLNKKIE). The segment at 1–44 (MAPSEKKLTEDKKNSSLNKKIETSNSSSEKSSENNNGDSQNNEA) is disordered. Positions 23–36 (TSNSSSEKSSENNN) are enriched in low complexity. A Q motif motif is present at residues 46–74 (KTFKELGVIDELCEACEKLGFKTPTPIQQ). Residues 77-248 (IPVVLNKRDV…RASLHQPVRV (172 aa)) form the Helicase ATP-binding domain. 90-97 (AQTGSGKT) provides a ligand contact to ATP. The DEAD box signature appears at 196–199 (DEAD). A Helicase C-terminal domain is found at 275–419 (YLVYLVNELA…EYEIDKEGVF (145 aa)). Over residues 442-453 (RRKSKGKLHTKR) the composition is skewed to basic residues. The segment at 442–465 (RRKSKGKLHTKRKRDDLDREEQIY) is disordered. Residues 454-465 (KRDDLDREEQIY) are compositionally biased toward basic and acidic residues.

It belongs to the DEAD box helicase family. DDX47/RRP3 subfamily. In terms of assembly, interacts with the SSU processome.

It is found in the nucleus. The enzyme catalyses ATP + H2O = ADP + phosphate + H(+). Functionally, ATP-dependent rRNA helicase required for pre-ribosomal RNA processing. Involved in the maturation of the 35S-pre-rRNA and to its cleavage to mature 18S rRNA. The polypeptide is ATP-dependent rRNA helicase rrp3 (Schizosaccharomyces pombe (strain 972 / ATCC 24843) (Fission yeast)).